Consider the following 141-residue polypeptide: NADPH-dependent 7-cyano-7-deazaguanine reductase (141 aa).

Cys34 (thioimide intermediate) is an active-site residue. The active-site Proton donor is the Asp41. Substrate contacts are provided by residues 56–58 (VEL) and 75–76 (HE).

Belongs to the GTP cyclohydrolase I family. QueF type 1 subfamily.

It localises to the cytoplasm. The enzyme catalyses 7-aminomethyl-7-carbaguanine + 2 NADP(+) = 7-cyano-7-deazaguanine + 2 NADPH + 3 H(+). It participates in tRNA modification; tRNA-queuosine biosynthesis. Functionally, catalyzes the NADPH-dependent reduction of 7-cyano-7-deazaguanine (preQ0) to 7-aminomethyl-7-deazaguanine (preQ1). The sequence is that of NADPH-dependent 7-cyano-7-deazaguanine reductase from Acidithiobacillus ferrooxidans (strain ATCC 23270 / DSM 14882 / CIP 104768 / NCIMB 8455) (Ferrobacillus ferrooxidans (strain ATCC 23270)).